Consider the following 175-residue polypeptide: CDP-archaeol synthase (175 aa).

The next 4 helical transmembrane spans lie at 41 to 61 (GLFSGIFCGFLAGCVEVWLSF), 82 to 102 (LIVVLALASGALFGDMFKSFF), 122 to 142 (FVVGAWVFTYLAAPEWFVSNF), and 150 to 170 (VIIITPLLHLTTNIIGYFIGV).

This sequence belongs to the CDP-archaeol synthase family. Mg(2+) is required as a cofactor.

The protein resides in the cell membrane. It catalyses the reaction 2,3-bis-O-(geranylgeranyl)-sn-glycerol 1-phosphate + CTP + H(+) = CDP-2,3-bis-O-(geranylgeranyl)-sn-glycerol + diphosphate. The protein operates within membrane lipid metabolism; glycerophospholipid metabolism. Catalyzes the formation of CDP-2,3-bis-(O-geranylgeranyl)-sn-glycerol (CDP-archaeol) from 2,3-bis-(O-geranylgeranyl)-sn-glycerol 1-phosphate (DGGGP) and CTP. This reaction is the third ether-bond-formation step in the biosynthesis of archaeal membrane lipids. In Methanosarcina mazei (strain ATCC BAA-159 / DSM 3647 / Goe1 / Go1 / JCM 11833 / OCM 88) (Methanosarcina frisia), this protein is CDP-archaeol synthase.